Here is a 362-residue protein sequence, read N- to C-terminus: Type II methyltransferase M.MamI (362 aa).

It belongs to the N(4)/N(6)-methyltransferase family.

The enzyme catalyses a 2'-deoxyadenosine in DNA + S-adenosyl-L-methionine = an N(6)-methyl-2'-deoxyadenosine in DNA + S-adenosyl-L-homocysteine + H(+). Its function is as follows. A gamma subtype methylase that recognizes the double-stranded sequence 5'-GATNNNNATC-3', methylates A-? on both strands, and protects the DNA from cleavage by the MamI endonuclease. The polypeptide is Type II methyltransferase M.MamI (Microbacterium ammoniaphilum).